A 447-amino-acid chain; its full sequence is MGKEKIHISIVVIGHVDSGKSTTTGHLIYKLGGIDKRVIESFEKEAAEMNKRSFKYAWVLDKLKAERERGITIDIALWKFETTKYSCTVIDAPGHRDFIKNMITGTSQADCAVLIIDSTTGGFEAGISKDGQTREHALLAFTLGVKHMICCCNKMDATTPKYSKSRYDEIVKEVSSYLKKVGYNPDKVPFVPISGFEGDNMIERSSNLDWYKGPTLLEALDQINEPKRPSEKPLRLPLQDVYKIGGIGTVPVGRVETGVIKPGMVVTFGPTGLTTEVKSVEMHHESLLEALPGDNVGFNVKNVAVKDLKRGYVASNSKDDPAKEAANFTAQVIIMNHPGQISNGYAPVLDCHTSHIAVKFAEIQTKIDRRSGKELEAAPKFLKNGDAGFVKMIPTKPMVVETFAQYPPLGRFAVRDMRQTVAVGVIKSVEKKEPTGAKVTKAAIKKK.

The tr-type G domain occupies 5 to 230 (KIHISIVVIG…DQINEPKRPS (226 aa)). A G1 region spans residues 14 to 21 (GHVDSGKS). 14 to 21 (GHVDSGKS) contributes to the GTP binding site. Position 55 is an N6,N6-dimethyllysine (Lys-55). The interval 70-74 (GITID) is G2. At Lys-79 the chain carries N6,N6,N6-trimethyllysine. The interval 91–94 (DAPG) is G3. GTP-binding positions include 91–95 (DAPGH) and 153–156 (NKMD). Residues 153-156 (NKMD) are G4. At Lys-187 the chain carries N6,N6,N6-trimethyllysine. The segment at 194–196 (SGF) is G5. Lys-261 bears the N6-methyllysine mark. 5-glutamyl glycerylphosphorylethanolamine is present on Glu-289. N6,N6,N6-trimethyllysine is present on Lys-306. Glu-362 is subject to 5-glutamyl glycerylphosphorylethanolamine. Lys-396 is modified (N6,N6,N6-trimethyllysine).

Belongs to the TRAFAC class translation factor GTPase superfamily. Classic translation factor GTPase family. EF-Tu/EF-1A subfamily.

Its subcellular location is the cytoplasm. In terms of biological role, this protein promotes the GTP-dependent binding of aminoacyl-tRNA to the A-site of ribosomes during protein biosynthesis. The chain is Elongation factor 1-alpha (BLT63) from Hordeum vulgare (Barley).